The chain runs to 314 residues: 4-hydroxy-3-methylbut-2-enyl diphosphate reductase (314 aa).

C12 contributes to the [4Fe-4S] cluster binding site. H43 and H81 together coordinate (2E)-4-hydroxy-3-methylbut-2-enyl diphosphate. Dimethylallyl diphosphate-binding residues include H43 and H81. Positions 43 and 81 each coordinate isopentenyl diphosphate. C103 contributes to the [4Fe-4S] cluster binding site. H131 serves as a coordination point for (2E)-4-hydroxy-3-methylbut-2-enyl diphosphate. H131 lines the dimethylallyl diphosphate pocket. H131 serves as a coordination point for isopentenyl diphosphate. Catalysis depends on E133, which acts as the Proton donor. T170 provides a ligand contact to (2E)-4-hydroxy-3-methylbut-2-enyl diphosphate. C198 provides a ligand contact to [4Fe-4S] cluster. (2E)-4-hydroxy-3-methylbut-2-enyl diphosphate is bound by residues S226, N228, and S271. Dimethylallyl diphosphate contacts are provided by S226, N228, and S271. Isopentenyl diphosphate contacts are provided by S226, N228, and S271.

The protein belongs to the IspH family. The cofactor is [4Fe-4S] cluster.

It catalyses the reaction isopentenyl diphosphate + 2 oxidized [2Fe-2S]-[ferredoxin] + H2O = (2E)-4-hydroxy-3-methylbut-2-enyl diphosphate + 2 reduced [2Fe-2S]-[ferredoxin] + 2 H(+). It carries out the reaction dimethylallyl diphosphate + 2 oxidized [2Fe-2S]-[ferredoxin] + H2O = (2E)-4-hydroxy-3-methylbut-2-enyl diphosphate + 2 reduced [2Fe-2S]-[ferredoxin] + 2 H(+). It participates in isoprenoid biosynthesis; dimethylallyl diphosphate biosynthesis; dimethylallyl diphosphate from (2E)-4-hydroxy-3-methylbutenyl diphosphate: step 1/1. The protein operates within isoprenoid biosynthesis; isopentenyl diphosphate biosynthesis via DXP pathway; isopentenyl diphosphate from 1-deoxy-D-xylulose 5-phosphate: step 6/6. In terms of biological role, catalyzes the conversion of 1-hydroxy-2-methyl-2-(E)-butenyl 4-diphosphate (HMBPP) into a mixture of isopentenyl diphosphate (IPP) and dimethylallyl diphosphate (DMAPP). Acts in the terminal step of the DOXP/MEP pathway for isoprenoid precursor biosynthesis. This is 4-hydroxy-3-methylbut-2-enyl diphosphate reductase from Bacillus licheniformis (strain ATCC 14580 / DSM 13 / JCM 2505 / CCUG 7422 / NBRC 12200 / NCIMB 9375 / NCTC 10341 / NRRL NRS-1264 / Gibson 46).